Reading from the N-terminus, the 324-residue chain is Cuticle collagen sqt-1 (324 aa).

2 disordered regions span residues 68 to 108 and 129 to 324; these read RRQY…TPNG and SGPK…YRNI. A compositionally biased stretch (pro residues) spans 87–97; it reads SAPPGQPPAVP. Triple-helical region regions lie at residues 127 to 153, 171 to 231, and 237 to 299; these read GPSG…PGVG, QGPV…KGRD, and GRPG…PGKD. 2 stretches are compositionally biased toward low complexity: residues 129-156 and 177-201; these read SGPK…GADD and PGAL…PGRD. Residues 227–236 show a composition bias toward basic and acidic residues; sequence EKGRDAEHPI.

It belongs to the cuticular collagen family. As to quaternary structure, collagen polypeptide chains are complexed within the cuticle by disulfide bonds and other types of covalent cross-links.

Nematode cuticles are composed largely of collagen-like proteins. The cuticle functions both as an exoskeleton and as a barrier to protect the worm from its environment. This is a collagen critical for organismal morphogenesis. Mutations in sqt-1 can lengthen, shorten, or helically twist the entire animal. The sequence is that of Cuticle collagen sqt-1 (sqt-1) from Caenorhabditis elegans.